We begin with the raw amino-acid sequence, 251 residues long: Vitamin B12 import ATP-binding protein BtuD (251 aa).

The 235-residue stretch at 2-236 (IRVNSLQVDS…EVLQSVFGTS (235 aa)) folds into the ABC transporter domain. 30 to 37 (GPNGCGKS) provides a ligand contact to ATP.

The protein belongs to the ABC transporter superfamily. Vitamin B12 importer (TC 3.A.1.13.1) family. The complex is composed of two ATP-binding proteins (BtuD), two transmembrane proteins (BtuC) and a solute-binding protein (BtuF).

It is found in the cell inner membrane. It catalyses the reaction an R-cob(III)alamin(out) + ATP + H2O = an R-cob(III)alamin(in) + ADP + phosphate + H(+). Part of the ABC transporter complex BtuCDF involved in vitamin B12 import. Responsible for energy coupling to the transport system. This Vibrio cholerae serotype O1 (strain ATCC 39315 / El Tor Inaba N16961) protein is Vitamin B12 import ATP-binding protein BtuD.